We begin with the raw amino-acid sequence, 487 residues long: MDPNSLKTGGLLLPTIERQCASPPSVIVIGGGISGVAAARALSNASFEVTVLESRDRVGGRVHTDYSFGCPIDMGASWLHGVCNENSLAPLIGYLGLKLYRTSGDNSVLYDHDLESYALFDKAGHQVSKETVAKVEETFERILDETVKVRDEQEHDMPLLQAISLVLERHPHLKLQGIDDQVLQWCVCRLEAWFAADADEISLKNWDQEHVLTGGHGLMVNGYYPIIQALAQGLDIRLNQRVTKIARQFNGVTVTTEDGTSYSADACIITVPLGVLKANIIKFEPELPSWKSSAIADLGVGIENKIAMHFDTVFWPNVEVLGMVGPTPKACGYFLNLHKATGNPVLVYMAAGRFAQEVEKLSDKEAVDLVMSHLKKMLPDATEPTKYLVSRWGSDPNSLGSYSCDLVGKPADVSARFAAPVENLYFAGEAASADHSGSVHGAYSSGIAAADECRKRILMQKGIPDLVQVKAYEEMAGVIAPLQICRT.

Glutamate 53, arginine 61, valine 242, and glutamate 429 together coordinate FAD. The short motif at 485 to 487 (CRT) is the Microbody targeting signal element.

This sequence belongs to the flavin monoamine oxidase family. It depends on FAD as a cofactor. Widely expressed.

The protein resides in the peroxisome. The catalysed reaction is spermine + O2 + H2O = 3-aminopropanal + spermidine + H2O2. The enzyme catalyses norspermine + O2 + H2O = norspermidine + 3-aminopropanal + H2O2. It catalyses the reaction thermospermine + O2 + H2O = 3-aminopropanal + spermidine + H2O2. The protein operates within amine and polyamine degradation; spermine degradation. Flavoenzyme involved in polyamine back-conversion. Catalyzes the oxidation of the secondary amino group of polyamines, such as spermine. Substrate preference is spermine &gt; thermospermine &gt; norspermine. No activity detected when putrescine, spermidine or N(1)-acetylspermidine are used as substrates. Plays an important role in the regulation of polyamine intracellular concentration. This is Polyamine oxidase 4 from Oryza sativa subsp. japonica (Rice).